Consider the following 237-residue polypeptide: Probable glutathione-independent glyoxalase HSP32 (237 aa).

Residues C138, H139, and E170 contribute to the active site.

Belongs to the peptidase C56 family. HSP31-like subfamily. Homodimer.

The protein localises to the cytoplasm. Its subcellular location is the P-body. It catalyses the reaction methylglyoxal + H2O = (R)-lactate + H(+). In terms of biological role, catalyzes the conversion of methylglyoxal (MG) to D-lactate in a single glutathione (GSH)-independent step. May play a role in detoxifying endogenously produced glyoxals. Involved in protection against reactive oxygen species (ROS). Important for viability in stationary phase. May negatively regulate TORC1 in response to nutrient limitation. The chain is Probable glutathione-independent glyoxalase HSP32 from Saccharomyces cerevisiae (strain ATCC 204508 / S288c) (Baker's yeast).